The following is a 424-amino-acid chain: UDP-N-acetylglucosamine 1-carboxyvinyltransferase (424 aa).

22–23 (KN) lines the phosphoenolpyruvate pocket. Arg-93 lines the UDP-N-acetyl-alpha-D-glucosamine pocket. Cys-117 functions as the Proton donor in the catalytic mechanism. Cys-117 bears the 2-(S-cysteinyl)pyruvic acid O-phosphothioketal mark. UDP-N-acetyl-alpha-D-glucosamine is bound by residues 162 to 165 (KVSV), Asp-307, and Ile-329.

Belongs to the EPSP synthase family. MurA subfamily.

It is found in the cytoplasm. It catalyses the reaction phosphoenolpyruvate + UDP-N-acetyl-alpha-D-glucosamine = UDP-N-acetyl-3-O-(1-carboxyvinyl)-alpha-D-glucosamine + phosphate. Its pathway is cell wall biogenesis; peptidoglycan biosynthesis. In terms of biological role, cell wall formation. Adds enolpyruvyl to UDP-N-acetylglucosamine. The polypeptide is UDP-N-acetylglucosamine 1-carboxyvinyltransferase (Actinobacillus pleuropneumoniae serotype 7 (strain AP76)).